The following is a 204-amino-acid chain: Large ribosomal subunit protein eL15 (204 aa).

The protein belongs to the eukaryotic ribosomal protein eL15 family. Component of the large ribosomal subunit.

Its subcellular location is the cytoplasm. Its function is as follows. Component of the large ribosomal subunit. The ribosome is a large ribonucleoprotein complex responsible for the synthesis of proteins in the cell. This chain is Large ribosomal subunit protein eL15 (rpl15), found in Monopterus albus (Swamp eel).